Reading from the N-terminus, the 163-residue chain is NADH-quinone oxidoreductase subunit I (163 aa).

2 4Fe-4S ferredoxin-type domains span residues 53 to 83 and 94 to 123; these read LRRY…IEAG and VRYD…EGPN. [4Fe-4S] cluster is bound by residues Cys63, Cys66, Cys69, Cys73, Cys103, Cys106, Cys109, and Cys113.

The protein belongs to the complex I 23 kDa subunit family. In terms of assembly, NDH-1 is composed of 14 different subunits. Subunits NuoA, H, J, K, L, M, N constitute the membrane sector of the complex. Requires [4Fe-4S] cluster as cofactor.

It localises to the cell inner membrane. It carries out the reaction a quinone + NADH + 5 H(+)(in) = a quinol + NAD(+) + 4 H(+)(out). Its function is as follows. NDH-1 shuttles electrons from NADH, via FMN and iron-sulfur (Fe-S) centers, to quinones in the respiratory chain. The immediate electron acceptor for the enzyme in this species is believed to be ubiquinone. Couples the redox reaction to proton translocation (for every two electrons transferred, four hydrogen ions are translocated across the cytoplasmic membrane), and thus conserves the redox energy in a proton gradient. In Agrobacterium fabrum (strain C58 / ATCC 33970) (Agrobacterium tumefaciens (strain C58)), this protein is NADH-quinone oxidoreductase subunit I.